The sequence spans 54 residues: Ribulose bisphosphate carboxylase large chain (54 aa).

A propeptide spanning residues 1–2 is cleaved from the precursor; that stretch reads MS. N-acetylproline is present on Pro-3. Position 14 is an N6,N6,N6-trimethyllysine (Lys-14).

The protein belongs to the RuBisCO large chain family. Type I subfamily. Heterohexadecamer of 8 large chains and 8 small chains.

The protein resides in the plastid. Its subcellular location is the chloroplast. The catalysed reaction is 2 (2R)-3-phosphoglycerate + 2 H(+) = D-ribulose 1,5-bisphosphate + CO2 + H2O. The enzyme catalyses D-ribulose 1,5-bisphosphate + O2 = 2-phosphoglycolate + (2R)-3-phosphoglycerate + 2 H(+). In terms of biological role, ruBisCO catalyzes two reactions: the carboxylation of D-ribulose 1,5-bisphosphate, the primary event in carbon dioxide fixation, as well as the oxidative fragmentation of the pentose substrate in the photorespiration process. Both reactions occur simultaneously and in competition at the same active site. The chain is Ribulose bisphosphate carboxylase large chain (rbcL) from Rhamnus cathartica (Common buckthorn).